The sequence spans 477 residues: MSDLIAQSRAGDNAEPLSVSALSQMLKRTVEDRFGYVRLRGELSGVKRAASGHMYCSLKDEKAVIDGVMWKGTTARLAFQPEDGLEVIATGKLTTYPGRSKYQIVLESLEMAGEGALLALLEKTRQRLEAEGLFARDRKRPLPFLPRTIGVVTSPTGAVIRDILHRLADRFPSHVLVWPVLVQGQGAAEQVSAAIRGFGAIKAGGEVPRPDLLIVARGGGSIEDLWSFNEEMVVRAIADSPIPVISAVGHETDTTLADYAADRRAPTPTAAAEIAVPVKGELAATLNDYAARQQRGVLRPLSLGRERLEARVQRLPTIETLLQPQAQKLDERVERLRGALRDRAAKGREALATQRLSPTMLQRAEREARRKLDQVRLAPALVERRAARDGERLAGLSRVLATLNPRAPLERGYALVRDADGKLVRAKGEATKQARLAVEFADGSLDVVPAGKAAAAPKRVKKSPPPGTSGAQEDLFG.

The tract at residues 452-477 is disordered; that stretch reads KAAAAPKRVKKSPPPGTSGAQEDLFG.

The protein belongs to the XseA family. Heterooligomer composed of large and small subunits.

The protein localises to the cytoplasm. The enzyme catalyses Exonucleolytic cleavage in either 5'- to 3'- or 3'- to 5'-direction to yield nucleoside 5'-phosphates.. Bidirectionally degrades single-stranded DNA into large acid-insoluble oligonucleotides, which are then degraded further into small acid-soluble oligonucleotides. The chain is Exodeoxyribonuclease 7 large subunit from Erythrobacter litoralis (strain HTCC2594).